The primary structure comprises 243 residues: Membrane selenoprotein (243 aa).

The segment at 12–63 is disordered; that stretch reads GEDCEGGVUARPSSSSSSINNASDESTPLISKTNDEEKANIGISSTSNSPQE. Sec20 is a non-standard amino acid (selenocysteine). 2 stretches are compositionally biased toward polar residues: residues 30-43 and 53-63; these read INNASDESTPLISK and GISSTSNSPQE. A run of 4 helical transmembrane segments spans residues 74-94, 102-122, 144-164, and 199-219; these read ILTLLISIPALVGSUCWPVLI, VSAGSVELAHSLTFAITLSIL, IKFGPFYLTAIAVPLATFDIL, and VMGWFSAIVFTYTGYACLLVG. Position 88 (Sec88) is a non-standard amino acid, selenocysteine.

The protein resides in the membrane. This chain is Membrane selenoprotein (msp), found in Dictyostelium discoideum (Social amoeba).